A 366-amino-acid polypeptide reads, in one-letter code: Putative amino-acid transporter MJ1196 (366 aa).

A run of 11 helical transmembrane segments spans residues 14-34 (ITSI…LLFG), 37-57 (IIWG…PFAY), 87-107 (ILWL…EIVF), 111-131 (FNVS…ILGG), 141-161 (IFGI…GIKI), 173-193 (ILTI…TMPL), 205-225 (GLLV…LTIV), 247-267 (FLLA…LFTL), 291-311 (IPYY…IFDA), 314-334 (LVDM…LAVF), and 346-366 (LISM…FIIL).

It belongs to the amino acid-polyamine-organocation (APC) superfamily.

The protein resides in the cell membrane. The chain is Putative amino-acid transporter MJ1196 from Methanocaldococcus jannaschii (strain ATCC 43067 / DSM 2661 / JAL-1 / JCM 10045 / NBRC 100440) (Methanococcus jannaschii).